Reading from the N-terminus, the 474-residue chain is BPI fold-containing family B member 1 (474 aa).

An N-terminal signal peptide occupies residues Met1–Ala21. N-linked (GlcNAc...) asparagine glycosylation is found at Asn153, Asn160, Asn263, and Asn400. Cysteines 157 and 200 form a disulfide.

Belongs to the BPI/LBP/Plunc superfamily. Plunc family. In terms of tissue distribution, expressed in tongue, lung, thymus, and stomach. Expressed in epithelia of palate, anterior pharynx, trachea and upper bronchi. Expressed in distal tip of papillae in the anterior third of the tongue and in serous cells of von Ebner glands in the posterior third of the tongue. Expressed in columnar epithelium of the duodenum in embryonic gut at 16.5 dpc.

The protein resides in the secreted. In terms of biological role, may play a role in innate immunity in mouth, nose and lungs. Binds bacterial lipopolysaccharide (LPS) and modulates the cellular responses to LPS. May be involved in formation of the left-right axis in the node of the developing embryo. The chain is BPI fold-containing family B member 1 (Bpifb1) from Mus musculus (Mouse).